We begin with the raw amino-acid sequence, 486 residues long: Cobyric acid synthase (486 aa).

The GATase cobBQ-type domain maps to 248-439; the sequence is VLRIVVPALP…LHGLFDTPHA (192 aa). C328 functions as the Nucleophile in the catalytic mechanism. Residue H431 is part of the active site.

It belongs to the CobB/CobQ family. CobQ subfamily.

The protein operates within cofactor biosynthesis; adenosylcobalamin biosynthesis. In terms of biological role, catalyzes amidations at positions B, D, E, and G on adenosylcobyrinic A,C-diamide. NH(2) groups are provided by glutamine, and one molecule of ATP is hydrogenolyzed for each amidation. The polypeptide is Cobyric acid synthase (Burkholderia mallei (strain ATCC 23344)).